Here is a 127-residue protein sequence, read N- to C-terminus: Small ribosomal subunit protein uS11 (127 aa).

It belongs to the universal ribosomal protein uS11 family. In terms of assembly, part of the 30S ribosomal subunit.

Functionally, located on the platform of the 30S subunit. The protein is Small ribosomal subunit protein uS11 of Picrophilus torridus (strain ATCC 700027 / DSM 9790 / JCM 10055 / NBRC 100828 / KAW 2/3).